Consider the following 585-residue polypeptide: MSQQHTLPVTLSPALSQELLKTVPPPVNTHQEQMKQPTPLPPPCQKVPVELPVEVPSKQEEKHMTAVKGLPEQECEQQQKEPQEQELQQQHWEQHEEYQKAENPEQQLKQEKTQRDQQLNKQLEEEKKLLDQQLDQELVKRDEQLGMKKEQLLELPEQQEGHLKHLEQQEGQLKHPEQQEGQLELPEQQEGQLELPEQQEGQLELPEQQEGQLELPEQQEGQLELPEQQEGQLELPQQQEGQLELSEQQEGQLELSEQQEGQLKHLEHQEGQLEVPEEQMGQLKYLEQQEGQLKHLDQQEKQPELPEQQMGQLKHLEQQEGQPKHLEQQEGQLEQLEEQEGQLKHLEQQEGQLEHLEHQEGQLGLPEQQVLQLKQLEKQQGQPKHLEEEEGQLKHLVQQEGQLKHLVQQEGQLEQQERQVEHLEQQVGQLKHLEEQEGQLKHLEQQQGQLEVPEQQVGQPKNLEQEEKQLELPEQQEGQVKHLEKQEAQLELPEQQVGQPKHLEQQEKHLEHPEQQDGQLKHLEQQEGQLKDLEQQKGQLEQPVFAPAPGQVQDIQPALPTKGEVLLPVEHQQQKQEVQWPPKHK.

A compositionally biased stretch (polar residues) spans 1–15; it reads MSQQHTLPVTLSPAL. Positions 1 to 132 are disordered; it reads MSQQHTLPVT…LEEEKKLLDQ (132 aa). Glutamine 79 carries Omega-hydroxyceramide glutamate ester lipidation. Positions 92–115 are enriched in basic and acidic residues; it reads WEQHEEYQKAENPEQQLKQEKTQR. 2 omega-hydroxyceramide glutamate ester lipidation sites follow: glutamine 118 and glutamine 133. Residues 149 to 540 are disordered; sequence KEQLLELPEQ…KDLEQQKGQL (392 aa). 23 consecutive repeat copies span residues 153-162, 163-172, 173-182, 183-192, 193-202, 203-212, 213-222, 223-232, 233-242, 243-252, 253-262, 263-272, 273-282, 283-292, 293-302, 303-312, 313-322, 323-332, 333-342, 343-352, 353-362, 363-372, and 373-382. Residues 153 to 542 are 39 X 10 AA approximate tandem repeats of [LP]-[EKG]-[LHVYQEK]-[PLSQE]-[EQDV]-[QHEKRGA]-Q-[EMVQLP]-[GKLE]-[QHVNLD]; the sequence is LELPEQQEGH…LEQQKGQLEQ (390 aa). A compositionally biased stretch (basic and acidic residues) spans 159-178; sequence QEGHLKHLEQQEGQLKHPEQ. A compositionally biased stretch (low complexity) spans 179–261; the sequence is QEGQLELPEQ…QLELSEQQEG (83 aa). The span at 262–271 shows a compositional bias: basic and acidic residues; it reads QLKHLEHQEG. 3 stretches are compositionally biased toward basic and acidic residues: residues 292 to 304, 314 to 328, and 341 to 360; these read QLKHLDQQEKQPE, KHLEQQEGQPKHLEQ, and GQLKHLEQQEGQLEHLEHQE. Over residues 361–383 the composition is skewed to low complexity; sequence GQLGLPEQQVLQLKQLEKQQGQP. One copy of the 24; approximate repeat lies at 383-392; the sequence is PKHLEEEEGQ. Positions 384–393 are enriched in basic and acidic residues; sequence KHLEEEEGQL. 11 tandem repeats follow at residues 393 to 402, 403 to 412, 413 to 422, 423 to 432, 433 to 442, 443 to 452, 453 to 462, 463 to 472, 473 to 482, 483 to 492, and 493 to 502. Basic and acidic residues-rich tracts occupy residues 415–424 and 431–444; these read QQERQVEHLE and KHLEEQEGQLKHLE. Positions 445 to 462 are enriched in low complexity; sequence QQQGQLEVPEQQVGQPKN. A compositionally biased stretch (basic and acidic residues) spans 479-488; it reads QVKHLEKQEA. Glutamine 496 is covalently cross-linked (Isoglutamyl lysine isopeptide (Gln-Lys) (interchain with K-? in other proteins)). The span at 501-535 shows a compositional bias: basic and acidic residues; that stretch reads KHLEQQEKHLEHPEQQDGQLKHLEQQEGQLKDLEQ. The stretch at 503–512 is one 36; approximate repeat; it reads LEQQEKHLEH. 2 consecutive repeat copies span residues 513-522 and 523-532. The stretch at 533–542 is one 39; approximate repeat; that stretch reads LEQQKGQLEQ.

This sequence belongs to the involucrin family. In terms of assembly, directly or indirectly cross-linked to cornifelin (CNFN). In terms of processing, substrate of transglutaminase. Some glutamines and lysines are cross-linked to other involucrin molecules, to other proteins such as keratin, desmoplakin, periplakin and envoplakin, and to lipids like omega-hydroxyceramide. In terms of tissue distribution, keratinocytes of epidermis and other stratified squamous epithelia.

It localises to the cytoplasm. Its function is as follows. Part of the insoluble cornified cell envelope (CE) of stratified squamous epithelia. The sequence is that of Involucrin (IVL) from Homo sapiens (Human).